The chain runs to 469 residues: A-type ATP synthase subunit B 3 (469 aa).

The protein belongs to the ATPase alpha/beta chains family. Has multiple subunits with at least A(3), B(3), C, D, E, F, H, I and proteolipid K(x).

Its subcellular location is the cell membrane. In terms of biological role, component of the A-type ATP synthase that produces ATP from ADP in the presence of a proton gradient across the membrane. The B chain is a regulatory subunit. This Methanospirillum hungatei JF-1 (strain ATCC 27890 / DSM 864 / NBRC 100397 / JF-1) protein is A-type ATP synthase subunit B 3.